Reading from the N-terminus, the 360-residue chain is Beta-1,3-N-acetylglucosaminyltransferase manic fringe (360 aa).

Residues methionine 1–arginine 5 lie on the Cytoplasmic side of the membrane. The helical; Signal-anchor for type II membrane protein transmembrane segment at leucine 6 to glutamine 26 threads the bilayer. At leucine 27–histidine 360 the chain is on the lumenal side. Residues threonine 51–glutamate 74 form a disordered region. The span at asparagine 55–glutamate 74 shows a compositional bias: basic and acidic residues. Arginine 100 is a binding site for substrate. Disulfide bonds link cysteine 139–cysteine 150 and cysteine 168–cysteine 231. Residue aspartate 172 participates in substrate binding. Aspartate 173 contacts Mn(2+). N-linked (GlcNAc...) asparagine glycosylation occurs at asparagine 214. Residue aspartate 261 is part of the active site. Histidine 285 contributes to the Mn(2+) binding site. An intrachain disulfide couples cysteine 335 to cysteine 344.

This sequence belongs to the glycosyltransferase 31 family. It depends on Mn(2+) as a cofactor.

Its subcellular location is the golgi apparatus membrane. The catalysed reaction is 3-O-(alpha-L-fucosyl)-L-threonyl-[EGF-like domain protein] + UDP-N-acetyl-alpha-D-glucosamine = 3-O-(N-acetyl-beta-D-glucosaminyl-(1-&gt;3)-alpha-L-fucosyl)-L-threonyl-[EGF-like domain protein] + UDP + H(+). The enzyme catalyses 3-O-(alpha-L-fucosyl)-L-seryl-[EGF-like domain protein] + UDP-N-acetyl-alpha-D-glucosamine = 3-O-(N-acetyl-beta-D-glucosaminyl-(1-&gt;3)-alpha-L-fucosyl)-L-seryl-[EGF-like domain protein] + UDP + H(+). Its function is as follows. Glycosyltransferase that initiates the elongation of O-linked fucose residues attached to EGF-like repeats in the extracellular domain of Notch molecules. This Danio rerio (Zebrafish) protein is Beta-1,3-N-acetylglucosaminyltransferase manic fringe.